Consider the following 63-residue polypeptide: Conotoxin Cal12.5 (63 aa).

The N-terminal stretch at 1 to 21 (MKVTCVLVVLLLLLPYGDLLG) is a signal peptide.

The protein belongs to the conotoxin O1 superfamily. Contains 4 disulfide bonds. As to expression, expressed by the venom duct.

It localises to the secreted. Probable neurotoxin. The chain is Conotoxin Cal12.5 from Californiconus californicus (California cone).